The sequence spans 174 residues: Actin-related protein 2/3 complex subunit 3 (174 aa).

This sequence belongs to the ARPC3 family. In terms of assembly, component of the Arp2/3 complex composed of arp2, act2, arc1/p41-ARC, arc2/p34-ARC, arc3/p21-ARC, arc4/p20-ARC and arc5/p16-ARC.

It is found in the cytoplasm. The protein resides in the cytoskeleton. It localises to the actin patch. Functions as a component of the Arp2/3 complex which is involved in regulation of actin polymerization and together with an activating nucleation-promoting factor (NPF) mediates the formation of branched actin networks. This is Actin-related protein 2/3 complex subunit 3 (arc3) from Schizosaccharomyces pombe (strain 972 / ATCC 24843) (Fission yeast).